A 561-amino-acid chain; its full sequence is NADH-quinone oxidoreductase subunit C/D (561 aa).

The interval 1–152 (MLEKFSSKFN…YQVLYESDDL (152 aa)) is NADH dehydrogenase I subunit C. The NADH dehydrogenase I subunit D stretch occupies residues 176–561 (KYTFLNIGPS…LNIIAGELDR (386 aa)).

In the N-terminal section; belongs to the complex I 30 kDa subunit family. This sequence in the C-terminal section; belongs to the complex I 49 kDa subunit family. As to quaternary structure, NDH-1 is composed of 13 different subunits. Subunits NuoB, CD, E, F, and G constitute the peripheral sector of the complex.

The protein resides in the cell inner membrane. The catalysed reaction is a quinone + NADH + 5 H(+)(in) = a quinol + NAD(+) + 4 H(+)(out). Its function is as follows. NDH-1 shuttles electrons from NADH, via FMN and iron-sulfur (Fe-S) centers, to quinones in the respiratory chain. The immediate electron acceptor for the enzyme in this species is believed to be ubiquinone. Couples the redox reaction to proton translocation (for every two electrons transferred, four hydrogen ions are translocated across the cytoplasmic membrane), and thus conserves the redox energy in a proton gradient. The protein is NADH-quinone oxidoreductase subunit C/D of Campylobacter fetus subsp. fetus (strain 82-40).